The chain runs to 302 residues: Sulfate adenylyltransferase subunit 2 (302 aa).

The tract at residues 280 to 302 is disordered; sequence RQGRLIDSDQSASMEQKKRQGYF.

Belongs to the PAPS reductase family. CysD subfamily. Heterodimer composed of CysD, the smaller subunit, and CysN.

The catalysed reaction is sulfate + ATP + H(+) = adenosine 5'-phosphosulfate + diphosphate. It functions in the pathway sulfur metabolism; hydrogen sulfide biosynthesis; sulfite from sulfate: step 1/3. Its function is as follows. With CysN forms the ATP sulfurylase (ATPS) that catalyzes the adenylation of sulfate producing adenosine 5'-phosphosulfate (APS) and diphosphate, the first enzymatic step in sulfur assimilation pathway. APS synthesis involves the formation of a high-energy phosphoric-sulfuric acid anhydride bond driven by GTP hydrolysis by CysN coupled to ATP hydrolysis by CysD. The protein is Sulfate adenylyltransferase subunit 2 of Shewanella frigidimarina (strain NCIMB 400).